A 486-amino-acid chain; its full sequence is Membrane-bound lytic murein transglycosylase F (486 aa).

A signal peptide spans 1-21; sequence MKRLKINYILIGVVTLLLALA. Residues 22-268 are non-LT domain; the sequence is LWPNITWRGG…RLEEKYLGHV (247 aa). Residues 269-486 are LT domain; the sequence is GSFDYVDTKT…AVTPELALNF (218 aa). Residue E313 is part of the active site.

This sequence in the N-terminal section; belongs to the bacterial solute-binding protein 3 family. The protein in the C-terminal section; belongs to the transglycosylase Slt family.

The protein resides in the cell outer membrane. It catalyses the reaction Exolytic cleavage of the (1-&gt;4)-beta-glycosidic linkage between N-acetylmuramic acid (MurNAc) and N-acetylglucosamine (GlcNAc) residues in peptidoglycan, from either the reducing or the non-reducing ends of the peptidoglycan chains, with concomitant formation of a 1,6-anhydrobond in the MurNAc residue.. In terms of biological role, murein-degrading enzyme that degrades murein glycan strands and insoluble, high-molecular weight murein sacculi, with the concomitant formation of a 1,6-anhydromuramoyl product. Lytic transglycosylases (LTs) play an integral role in the metabolism of the peptidoglycan (PG) sacculus. Their lytic action creates space within the PG sacculus to allow for its expansion as well as for the insertion of various structures such as secretion systems and flagella. The polypeptide is Membrane-bound lytic murein transglycosylase F (Serratia proteamaculans (strain 568)).